The chain runs to 222 residues: Probable transaldolase (222 aa).

Catalysis depends on Lys91, which acts as the Schiff-base intermediate with substrate.

The protein belongs to the transaldolase family. Type 3B subfamily.

The protein resides in the cytoplasm. The enzyme catalyses D-sedoheptulose 7-phosphate + D-glyceraldehyde 3-phosphate = D-erythrose 4-phosphate + beta-D-fructose 6-phosphate. The protein operates within carbohydrate degradation; pentose phosphate pathway; D-glyceraldehyde 3-phosphate and beta-D-fructose 6-phosphate from D-ribose 5-phosphate and D-xylulose 5-phosphate (non-oxidative stage): step 2/3. Transaldolase is important for the balance of metabolites in the pentose-phosphate pathway. This is Probable transaldolase from Pelodictyon phaeoclathratiforme (strain DSM 5477 / BU-1).